Consider the following 98-residue polypeptide: DNA-binding protein Fis (98 aa).

A DNA-binding region (H-T-H motif) is located at residues 74–93 (QTRAATMMGINRGTLRKKLK).

The protein belongs to the transcriptional regulatory Fis family. As to quaternary structure, homodimer.

Activates ribosomal RNA transcription. Plays a direct role in upstream activation of rRNA promoters. The protein is DNA-binding protein Fis of Vibrio atlanticus (strain LGP32) (Vibrio splendidus (strain Mel32)).